A 255-amino-acid polypeptide reads, in one-letter code: Borealin-2 (255 aa).

Disordered regions lie at residues 1 to 24 (MAPR…HSFE) and 107 to 156 (IQKP…STGS). Over residues 124–135 (AGQQRSSSQSKT) the composition is skewed to polar residues.

This sequence belongs to the borealin family. Component of the CPC complex.

Its subcellular location is the nucleus. The protein resides in the chromosome. It localises to the centromere. Component of the chromosomal passenger complex (CPC), a complex that acts as a key regulator of mitosis. The CPC complex has essential functions at the centromere in ensuring correct chromosome alignment and segregation and is required for chromatin-induced microtubule stabilization and spindle assembly. In Danio rerio (Zebrafish), this protein is Borealin-2 (cdca9).